Reading from the N-terminus, the 464-residue chain is Cysteine--tRNA ligase (464 aa).

Zn(2+) is bound at residue cysteine 27. The short motif at 29-39 (PTVYNYFHIGN) is the 'HIGH' region element. Zn(2+)-binding residues include cysteine 207, histidine 232, and glutamate 236. Residues 264–268 (KMSKS) carry the 'KMSKS' region motif. Residue lysine 267 coordinates ATP.

Belongs to the class-I aminoacyl-tRNA synthetase family. Monomer. Zn(2+) is required as a cofactor.

It localises to the cytoplasm. It carries out the reaction tRNA(Cys) + L-cysteine + ATP = L-cysteinyl-tRNA(Cys) + AMP + diphosphate. The protein is Cysteine--tRNA ligase of Alkaliphilus oremlandii (strain OhILAs) (Clostridium oremlandii (strain OhILAs)).